The sequence spans 131 residues: D-ribose pyranase (131 aa).

The active-site Proton donor is the histidine 20. Substrate contacts are provided by residues aspartate 28, histidine 98, and tyrosine 120–asparagine 122.

Belongs to the RbsD / FucU family. RbsD subfamily. As to quaternary structure, homodecamer.

The protein localises to the cytoplasm. The catalysed reaction is beta-D-ribopyranose = beta-D-ribofuranose. Its pathway is carbohydrate metabolism; D-ribose degradation; D-ribose 5-phosphate from beta-D-ribopyranose: step 1/2. Its function is as follows. Catalyzes the interconversion of beta-pyran and beta-furan forms of D-ribose. This chain is D-ribose pyranase, found in Bacillus cereus (strain ZK / E33L).